We begin with the raw amino-acid sequence, 297 residues long: Transcription factor LRL3 (297 aa).

Residues 59–109 (PDQFHHPQESGGPTMGSQEGLQPQGTVSTTSAPVVRQKPRVRARRGQATDP) are disordered. Positions 73–90 (MGSQEGLQPQGTVSTTSA) are enriched in polar residues. A basic motif; degenerate region spans residues 105–118 (QATDPHSIAERLRR). A bHLH domain is found at 105-154 (QATDPHSIAERLRRERIAERMKSLQELVPNTNKTDKASMLDEIIEYVRFL). The segment at 119–154 (ERIAERMKSLQELVPNTNKTDKASMLDEIIEYVRFL) is helix-loop-helix motif.

In terms of assembly, homodimer. As to expression, expressed in trichomes of the root maturation zone. Detected constitutively in flowers.

The protein localises to the nucleus. In terms of biological role, transcription factor that regulates the development of root hairs. Does not seem to be involved in the regulation of sperm cell development. This chain is Transcription factor LRL3, found in Arabidopsis thaliana (Mouse-ear cress).